The chain runs to 408 residues: Putative agmatinase 3 (408 aa).

An N-terminal signal peptide occupies residues methionine 1–alanine 21. Mn(2+)-binding residues include histidine 198, aspartate 222, histidine 224, aspartate 226, aspartate 319, and aspartate 321.

This sequence belongs to the arginase family. Mn(2+) is required as a cofactor.

The catalysed reaction is agmatine + H2O = urea + putrescine. The chain is Putative agmatinase 3 from Schizosaccharomyces pombe (strain 972 / ATCC 24843) (Fission yeast).